Reading from the N-terminus, the 224-residue chain is MNSDLALLRLLQLASPGLPVGGFTYSQGLEWAVEAGWVRDIKSFSAWQREQMNDTLAYLDWPVLARLYYACKADDADAFARWSRFLLANRETAELRLEEQQRGAALARLLDGWQLGQAPAWRPSLELSQLGGMAWLAVHWSIPLRQLALGHAFAWLEGAVMAGVKLVPFGQQAAQTLLRDLGEILPGVIDQALALGDDQLGGGLPLLAIASSRHETQYTRLFRS.

This sequence belongs to the UreF family. As to quaternary structure, ureD, UreF and UreG form a complex that acts as a GTP-hydrolysis-dependent molecular chaperone, activating the urease apoprotein by helping to assemble the nickel containing metallocenter of UreC. The UreE protein probably delivers the nickel.

The protein localises to the cytoplasm. Functionally, required for maturation of urease via the functional incorporation of the urease nickel metallocenter. The protein is Urease accessory protein UreF of Pseudomonas putida (strain W619).